The chain runs to 163 residues: Transcriptional repressor NrdR (163 aa).

Residues 3-34 (CPKCNYLKSSVVDSRQAEEGNTIRRRRECENC) fold into a zinc finger. One can recognise an ATP-cone domain in the interval 49 to 139 (LLVVKKDGTR…VYRSFKDVDE (91 aa)).

The protein belongs to the NrdR family. Requires Zn(2+) as cofactor.

Negatively regulates transcription of bacterial ribonucleotide reductase nrd genes and operons by binding to NrdR-boxes. In Streptococcus mutans serotype c (strain ATCC 700610 / UA159), this protein is Transcriptional repressor NrdR.